The chain runs to 557 residues: Dihydroxy-acid dehydratase (557 aa).

[2Fe-2S] cluster is bound at residue C49. Mg(2+) is bound at residue D81. C122 is a [2Fe-2S] cluster binding site. Residues D123 and K124 each contribute to the Mg(2+) site. K124 is modified (N6-carboxylysine). Position 194 (C194) interacts with [2Fe-2S] cluster. E446 contacts Mg(2+). S472 serves as the catalytic Proton acceptor.

It belongs to the IlvD/Edd family. Homodimer. Requires [2Fe-2S] cluster as cofactor. Mg(2+) serves as cofactor.

The enzyme catalyses (2R)-2,3-dihydroxy-3-methylbutanoate = 3-methyl-2-oxobutanoate + H2O. The catalysed reaction is (2R,3R)-2,3-dihydroxy-3-methylpentanoate = (S)-3-methyl-2-oxopentanoate + H2O. The protein operates within amino-acid biosynthesis; L-isoleucine biosynthesis; L-isoleucine from 2-oxobutanoate: step 3/4. It functions in the pathway amino-acid biosynthesis; L-valine biosynthesis; L-valine from pyruvate: step 3/4. Functions in the biosynthesis of branched-chain amino acids. Catalyzes the dehydration of (2R,3R)-2,3-dihydroxy-3-methylpentanoate (2,3-dihydroxy-3-methylvalerate) into 2-oxo-3-methylpentanoate (2-oxo-3-methylvalerate) and of (2R)-2,3-dihydroxy-3-methylbutanoate (2,3-dihydroxyisovalerate) into 2-oxo-3-methylbutanoate (2-oxoisovalerate), the penultimate precursor to L-isoleucine and L-valine, respectively. The polypeptide is Dihydroxy-acid dehydratase (Prochlorococcus marinus (strain MIT 9215)).